The primary structure comprises 441 residues: Queuine tRNA-ribosyltransferase accessory subunit 2 (441 aa).

Zn(2+) contacts are provided by C307, C309, C312, and H338.

The protein belongs to the queuine tRNA-ribosyltransferase family. QTRT2 subfamily. In terms of assembly, heterodimer of a catalytic subunit and an accessory subunit. The cofactor is Zn(2+).

The protein resides in the cytoplasm. Functionally, non-catalytic subunit of the queuine tRNA-ribosyltransferase (TGT) that catalyzes the base-exchange of a guanine (G) residue with queuine (Q) at position 34 (anticodon wobble position) in tRNAs with GU(N) anticodons (tRNA-Asp, -Asn, -His and -Tyr), resulting in the hypermodified nucleoside queuosine (7-(((4,5-cis-dihydroxy-2-cyclopenten-1-yl)amino)methyl)-7-deazaguanosine). The chain is Queuine tRNA-ribosyltransferase accessory subunit 2 (qtr2) from Schizosaccharomyces pombe (strain 972 / ATCC 24843) (Fission yeast).